The following is a 581-amino-acid chain: Arginine--tRNA ligase (581 aa).

The 'HIGH' region motif lies at 126–136; the sequence is PNLAKEMHVGH.

It belongs to the class-I aminoacyl-tRNA synthetase family. In terms of assembly, monomer.

The protein localises to the cytoplasm. The catalysed reaction is tRNA(Arg) + L-arginine + ATP = L-arginyl-tRNA(Arg) + AMP + diphosphate. The chain is Arginine--tRNA ligase from Shewanella halifaxensis (strain HAW-EB4).